The following is a 262-amino-acid chain: Phosphatidylglycerol--prolipoprotein diacylglyceryl transferase (262 aa).

3 helical membrane-spanning segments follow: residues 17-37 (LKVHWYGLMYVIGIAATWILA), 57-77 (LVFYAAIGVVVGGRLGYALFY), and 92-112 (IWEGGMAFHGGLIGVLIAMYA). Arg140 provides a ligand contact to a 1,2-diacyl-sn-glycero-3-phospho-(1'-sn-glycerol). 2 helical membrane passes run 200–220 (MAVSGLFLLGYGVFRFAVEFV) and 234–254 (WLTMGQILCLPMILFGIVLLA).

This sequence belongs to the Lgt family.

Its subcellular location is the cell inner membrane. It catalyses the reaction L-cysteinyl-[prolipoprotein] + a 1,2-diacyl-sn-glycero-3-phospho-(1'-sn-glycerol) = an S-1,2-diacyl-sn-glyceryl-L-cysteinyl-[prolipoprotein] + sn-glycerol 1-phosphate + H(+). It participates in protein modification; lipoprotein biosynthesis (diacylglyceryl transfer). Catalyzes the transfer of the diacylglyceryl group from phosphatidylglycerol to the sulfhydryl group of the N-terminal cysteine of a prolipoprotein, the first step in the formation of mature lipoproteins. This chain is Phosphatidylglycerol--prolipoprotein diacylglyceryl transferase, found in Methylococcus capsulatus (strain ATCC 33009 / NCIMB 11132 / Bath).